Consider the following 126-residue polypeptide: Fluoride-specific ion channel FluC (126 aa).

4 helical membrane-spanning segments follow: residues 9–29 (LAVF…GFQL), 35–55 (LTAT…LYAI), 63–83 (LLHL…SFVL), and 94–114 (WSIG…AAIL). 2 residues coordinate Na(+): G73 and S76.

It belongs to the fluoride channel Fluc/FEX (TC 1.A.43) family.

The protein resides in the cell inner membrane. The catalysed reaction is fluoride(in) = fluoride(out). With respect to regulation, na(+) is not transported, but it plays an essential structural role and its presence is essential for fluoride channel function. Its function is as follows. Fluoride-specific ion channel. Important for reducing fluoride concentration in the cell, thus reducing its toxicity. This chain is Fluoride-specific ion channel FluC, found in Ruegeria pomeroyi (strain ATCC 700808 / DSM 15171 / DSS-3) (Silicibacter pomeroyi).